Reading from the N-terminus, the 372-residue chain is Chloroplast protein FOR GROWTH AND FERTILITY 2 (372 aa).

Residues 1 to 20 (MDRLLQPPSSHSIAPSKFQS) form a disordered region. Residues 1-78 (MDRLLQPPSS…NQSSNFLIAS (78 aa)) constitute a chloroplast transit peptide. A compositionally biased stretch (polar residues) spans 7-20 (PPSSHSIAPSKFQS). The next 7 helical transmembrane spans lie at 109-129 (VILV…PPAF), 161-181 (FFAG…LAPL), 195-215 (ALWG…FLLL), 231-251 (VVGL…SEMP), 281-301 (GIVH…LALP), 309-329 (FLIM…VFIG), and 352-372 (LVAI…FSLY).

As to expression, mostly expressed in leaves, stems and flowers, to a lower extent, in roots, floral bud, inflorescence and siliques, and, barely, in seedlings.

It localises to the plastid. It is found in the chloroplast membrane. The protein localises to the plastid membrane. In terms of biological role, together with CGF1, essential protein which supports female gametogenesis and embryogenesis, probably by securing local energy supply. The protein is Chloroplast protein FOR GROWTH AND FERTILITY 2 of Arabidopsis thaliana (Mouse-ear cress).